Consider the following 263-residue polypeptide: tRNA pseudouridine synthase A (263 aa).

The active-site Nucleophile is the Asp-57. Residue Tyr-115 coordinates substrate.

This sequence belongs to the tRNA pseudouridine synthase TruA family. In terms of assembly, homodimer.

The catalysed reaction is uridine(38/39/40) in tRNA = pseudouridine(38/39/40) in tRNA. Functionally, formation of pseudouridine at positions 38, 39 and 40 in the anticodon stem and loop of transfer RNAs. The polypeptide is tRNA pseudouridine synthase A (Buchnera aphidicola subsp. Schizaphis graminum (strain Sg)).